We begin with the raw amino-acid sequence, 345 residues long: Neuropeptide receptor 15 (345 aa).

Topologically, residues 1-11 are extracellular; it reads MSVAVGIPYVC. The chain crosses the membrane as a helical span at residues 12-32; the sequence is FFIILSVVGIIGNVIVIYAIA. The Cytoplasmic segment spans residues 33–40; that stretch reads GDRNMRKS. A helical transmembrane segment spans residues 41-61; it reads VMNILLLNLAVADLANLIFTI. At 62 to 90 the chain is on the extracellular side; that stretch reads PEWIPPVFFGSTDWLFPSFLCPVCRYLEC. Cys-82 and Cys-171 are oxidised to a cystine. Residues 91–111 form a helical membrane-spanning segment; sequence VFLFASISTQMIVCIERYIAI. Topologically, residues 112-125 are cytoplasmic; it reads VLPMQARQLCSRRN. Residues 126–146 traverse the membrane as a helical segment; that stretch reads VLITVLVDWIFVACFASPYAV. The Extracellular segment spans residues 147-187; that stretch reads WHSVKTKDRNTNSLRFKLFQLSATCSNTVGKSTWWQGYKLT. The helical transmembrane segment at 188-208 threads the bilayer; the sequence is EFLAFYFVPCFIITVVYTKVA. The Cytoplasmic segment spans residues 209–246; that stretch reads KCLWCKDPTLQCETRSCLDNKSSSRSSDALRTRRNVVK. A helical membrane pass occupies residues 247–267; the sequence is MLIACVAVYFVCYSPIQVIFL. Over 268-281 the chain is Extracellular; the sequence is SKAVLNVTIHPPYD. A helical membrane pass occupies residues 282–304; the sequence is FILLMNALAMTCSASNPLLYTLF. Over 305–345 the chain is Cytoplasmic; the sequence is SQKFRRRLRDVLYCPSDVENETKTYYSINNTSIVGPRASFN.

It belongs to the G-protein coupled receptor 1 family. In terms of tissue distribution, expressed in pharyngeal muscle and AWC, ASG, ASE, ASI, and ASJ sensory neurons. Expressed in ASI neuron. Expressed in AFD neurons and in AVK interneuron.

The protein resides in the cell membrane. Its function is as follows. Probable receptor for neuropeptide ligand nlp-8 that plays a role in octopamine signaling and specifically, the octopamine inhibition of aversion responses in olfactory sensory neurons. Plays a crucial role in daf-7 expression. Acts in concert with gpa-4 to activate TGF-beta-like daf-7 secretion in the ASI neuron, thereby promoting larval development and inhibition of dauer diapause. Suppresses immune response against pathogenic infection by inhibiting transcription regulators elt-2 and hlh-30 in ASJ neuron. Promotes pathogen avoidance behavior via intestinal gon-2, independent of aerotaxis. This chain is Neuropeptide receptor 15 (npr-15), found in Caenorhabditis elegans.